Consider the following 299-residue polypeptide: GTPase Era (299 aa).

An Era-type G domain is found at 4–171; sequence KSGFVAILGR…VDILSENLDE (168 aa). The G1 stretch occupies residues 12–19; sequence GRPNVGKS. Position 12–19 (12–19) interacts with GTP; sequence GRPNVGKS. A G2 region spans residues 38–42; the sequence is XTTRN. The segment at 59–62 is G3; that stretch reads DTPG. Residues 59–63 and 121–124 contribute to the GTP site; these read DTPGI and NKID. The segment at 121–124 is G4; sequence NKID. Positions 150 to 152 are G5; sequence ISA. One can recognise a KH type-2 domain in the interval 202-280; it reads TREEIPHSVA…FLETWVKVKK (79 aa).

It belongs to the TRAFAC class TrmE-Era-EngA-EngB-Septin-like GTPase superfamily. Era GTPase family. Monomer.

It localises to the cytoplasm. It is found in the cell membrane. An essential GTPase that binds both GDP and GTP, with rapid nucleotide exchange. Plays a role in 16S rRNA processing and 30S ribosomal subunit biogenesis and possibly also in cell cycle regulation and energy metabolism. The chain is GTPase Era from Streptococcus pneumoniae serotype 19F (strain G54).